The chain runs to 875 residues: Leucine--tRNA ligase (875 aa).

The 'HIGH' region signature appears at 57–67 (PYPSGQIHMGH). Positions 631–635 (KMSKS) match the 'KMSKS' region motif. K634 contacts ATP.

This sequence belongs to the class-I aminoacyl-tRNA synthetase family.

The protein localises to the cytoplasm. The catalysed reaction is tRNA(Leu) + L-leucine + ATP = L-leucyl-tRNA(Leu) + AMP + diphosphate. The sequence is that of Leucine--tRNA ligase from Granulibacter bethesdensis (strain ATCC BAA-1260 / CGDNIH1).